We begin with the raw amino-acid sequence, 101 residues long: NADH-quinone oxidoreductase subunit K (101 aa).

3 helical membrane passes run 4–24 (LAHY…GIFL), 30–50 (IIIL…FVAF), and 61–81 (IFVF…LAIL).

It belongs to the complex I subunit 4L family. NDH-1 is composed of 14 different subunits. Subunits NuoA, H, J, K, L, M, N constitute the membrane sector of the complex.

It localises to the cell inner membrane. It carries out the reaction a quinone + NADH + 5 H(+)(in) = a quinol + NAD(+) + 4 H(+)(out). Its function is as follows. NDH-1 shuttles electrons from NADH, via FMN and iron-sulfur (Fe-S) centers, to quinones in the respiratory chain. The immediate electron acceptor for the enzyme in this species is believed to be ubiquinone. Couples the redox reaction to proton translocation (for every two electrons transferred, four hydrogen ions are translocated across the cytoplasmic membrane), and thus conserves the redox energy in a proton gradient. The polypeptide is NADH-quinone oxidoreductase subunit K (Paraburkholderia xenovorans (strain LB400)).